The primary structure comprises 261 residues: Mannose-specific lectin 2 (261 aa).

The first 23 residues, 1-23 (MAKLLLFLLPAILGLLIPRSAVA), serve as a signal peptide directing secretion. Bulb-type lectin domains are found at residues 26–131 (TNYL…PWVP) and 145–252 (DNLL…SKRS). Beta-D-mannose contacts are provided by residues 51 to 55 (QNDCN), Y59, W63, Q64, 170 to 174 (QGDCN), Y178, and 182 to 185 (YGWQ). The Carbohydrate-binding motif 1 signature appears at 51 to 59 (QNDCNLVLY). 2 disulfide bridges follow: C54–C74 and C173–C195. The short motif at 170–178 (QGDCNLVLY) is the Carbohydrate-binding motif 2 element.

In terms of assembly, forms heterotetramer of 2 chains 1 and 2 chains 2 arranged as a dimer of chain 1 and chain 2 heterodimers.

Its function is as follows. Mannose-specific lectin. Shows agglutinating activity towards erythrocytes from rabbit. The protein is Mannose-specific lectin 2 of Colocasia esculenta (Wild taro).